A 323-amino-acid chain; its full sequence is Extracellular endo-alpha-(1-&gt;5)-L-arabinanase 1 (323 aa).

Residues Met1–Ala32 form the signal peptide. Catalysis depends on Asp44, which acts as the Proton acceptor. Asp44 is a binding site for substrate. Asp107 provides a ligand contact to Ca(2+). Substrate contacts are provided by residues Gly125 and Asn160–Asp163. A Ca(2+)-binding site is contributed by Glu165. Ser180–Trp182 is a binding site for substrate. Glu215 serves as the catalytic Proton donor. Asp287 lines the Ca(2+) pocket.

This sequence belongs to the glycosyl hydrolase 43 family. It depends on Ca(2+) as a cofactor.

The protein localises to the secreted. It carries out the reaction Endohydrolysis of (1-&gt;5)-alpha-arabinofuranosidic linkages in (1-&gt;5)-arabinans.. The protein operates within glycan metabolism; L-arabinan degradation. Functionally, involved in the degradation of arabinan and is a key enzyme in the complete degradation of the plant cell wall. Catalyzes the internal cleavage of alpha-(1-&gt;5)-L-arabinofuranosyl residues of linear 1,5-alpha-L-arabinan and of branched sugar beet arabinan. It displays no activity against heavily substituted arabinans or a range of other polysaccharides (larch wood arabinogalactan, wheat arabinoxylan and p-nitrophenyl-alpha-L-arabinofuranoside). The enzyme activity is progressively reduced as alpha-(1-&gt;5)-chains become shorter or more highly substituted. The protein is Extracellular endo-alpha-(1-&gt;5)-L-arabinanase 1 (abnA) of Bacillus subtilis (strain 168).